The primary structure comprises 667 residues: UvrABC system protein C (667 aa).

The GIY-YIG domain maps to A43–V122. Residues Q232 to L267 enclose the UVR domain.

Belongs to the UvrC family. Interacts with UvrB in an incision complex.

The protein localises to the cytoplasm. Functionally, the UvrABC repair system catalyzes the recognition and processing of DNA lesions. UvrC both incises the 5' and 3' sides of the lesion. The N-terminal half is responsible for the 3' incision and the C-terminal half is responsible for the 5' incision. The chain is UvrABC system protein C from Prochlorococcus marinus (strain MIT 9313).